The following is a 552-amino-acid chain: FERRY endosomal RAB5 effector complex subunit 3 (552 aa).

Residues leucine 383–alanine 403 are disordered.

Component of the FERRY complex composed of five subunits, TBCK, PPP1R21, FERRY3, CRYZL1 and GATD1 with a ratio of 1:2:1:2:4, respectively.

The protein localises to the cytoplasm. The protein resides in the early endosome. In terms of biological role, component of the FERRY complex (Five-subunit Endosomal Rab5 and RNA/ribosome intermediary). The FERRY complex directly interacts with mRNAs and RAB5A, and functions as a RAB5A effector involved in the localization and the distribution of specific mRNAs most likely by mediating their endosomal transport. The complex recruits mRNAs and ribosomes to early endosomes through direct mRNA-interaction. Plays a role in mast cell degranulation. This chain is FERRY endosomal RAB5 effector complex subunit 3, found in Pongo abelii (Sumatran orangutan).